We begin with the raw amino-acid sequence, 187 residues long: UPF0200 protein MM_1313 (187 aa).

An ATP-binding site is contributed by 9 to 16; it reads GMPASGKS.

This sequence belongs to the UPF0200 family.

The chain is UPF0200 protein MM_1313 from Methanosarcina mazei (strain ATCC BAA-159 / DSM 3647 / Goe1 / Go1 / JCM 11833 / OCM 88) (Methanosarcina frisia).